The sequence spans 156 residues: MPRETGRKVIASNRKARHDYFIDDVYEAGVSLMGTEVKALRMGRASLVDGFAHIDRGEMWLEGVHIPEYVQGTWTNHTPRRKRKLLLHREEIDRWAGKVRESGLTIVPLALYFLDGRVKVEIGLARGKKNYDKRHALRERQDRREADRAMSERKDR.

Residues 135-156 form a disordered region; sequence HALRERQDRREADRAMSERKDR.

This sequence belongs to the SmpB family.

It localises to the cytoplasm. Required for rescue of stalled ribosomes mediated by trans-translation. Binds to transfer-messenger RNA (tmRNA), required for stable association of tmRNA with ribosomes. tmRNA and SmpB together mimic tRNA shape, replacing the anticodon stem-loop with SmpB. tmRNA is encoded by the ssrA gene; the 2 termini fold to resemble tRNA(Ala) and it encodes a 'tag peptide', a short internal open reading frame. During trans-translation Ala-aminoacylated tmRNA acts like a tRNA, entering the A-site of stalled ribosomes, displacing the stalled mRNA. The ribosome then switches to translate the ORF on the tmRNA; the nascent peptide is terminated with the 'tag peptide' encoded by the tmRNA and targeted for degradation. The ribosome is freed to recommence translation, which seems to be the essential function of trans-translation. This chain is SsrA-binding protein, found in Kineococcus radiotolerans (strain ATCC BAA-149 / DSM 14245 / SRS30216).